Here is a 242-residue protein sequence, read N- to C-terminus: Leucyl/phenylalanyl-tRNA--protein transferase (242 aa).

The protein belongs to the L/F-transferase family.

It is found in the cytoplasm. It carries out the reaction N-terminal L-lysyl-[protein] + L-leucyl-tRNA(Leu) = N-terminal L-leucyl-L-lysyl-[protein] + tRNA(Leu) + H(+). The catalysed reaction is N-terminal L-arginyl-[protein] + L-leucyl-tRNA(Leu) = N-terminal L-leucyl-L-arginyl-[protein] + tRNA(Leu) + H(+). The enzyme catalyses L-phenylalanyl-tRNA(Phe) + an N-terminal L-alpha-aminoacyl-[protein] = an N-terminal L-phenylalanyl-L-alpha-aminoacyl-[protein] + tRNA(Phe). In terms of biological role, functions in the N-end rule pathway of protein degradation where it conjugates Leu, Phe and, less efficiently, Met from aminoacyl-tRNAs to the N-termini of proteins containing an N-terminal arginine or lysine. The polypeptide is Leucyl/phenylalanyl-tRNA--protein transferase (Edwardsiella ictaluri (strain 93-146)).